The chain runs to 37 residues: MKVRTSVKKICSSCKVIRRKGVIRVICTNPKHKQRQA.

The protein belongs to the bacterial ribosomal protein bL36 family.

This Leptospira interrogans serogroup Icterohaemorrhagiae serovar copenhageni (strain Fiocruz L1-130) protein is Large ribosomal subunit protein bL36.